The sequence spans 125 residues: Protein ApaG (125 aa).

The region spanning 3-125 is the ApaG domain; the sequence is TAVTEGIEVT…FPLVVPGTLN (123 aa).

This Anaeromyxobacter sp. (strain K) protein is Protein ApaG.